The following is a 211-amino-acid chain: Endo-1,4-beta-xylanase 4 (211 aa).

An N-terminal signal peptide occupies residues 1 to 16; the sequence is MKVTAAFAGLLVTAFA. Positions 19-210 constitute a GH11 domain; that stretch reads VPEPVLVSRS…GACSASVTIS (192 aa). Residue N101 is glycosylated (N-linked (GlcNAc...) asparagine). Catalysis depends on E106, which acts as the Nucleophile. E197 serves as the catalytic Proton donor.

It belongs to the glycosyl hydrolase 11 (cellulase G) family.

The protein resides in the secreted. The catalysed reaction is Endohydrolysis of (1-&gt;4)-beta-D-xylosidic linkages in xylans.. Its pathway is glycan degradation; xylan degradation. In terms of biological role, endo-1,4-beta-xylanase involved in the hydrolysis of xylan, a major structural heterogeneous polysaccharide found in plant biomass representing the second most abundant polysaccharide in the biosphere, after cellulose. This Aspergillus niger protein is Endo-1,4-beta-xylanase 4 (XYN4).